The following is a 527-amino-acid chain: MSYPLEEVNKRRTFAIISHPDAGKTTITEKVLLYGNAIQTAGSVKGKGSAAHAKSDWMEMEKQRGISITTSVMQFPYNNCLVNLLDTPGHEDFSEDTYRTLTAVDSCLMVIDSAKGVEERTIKLMEVTRLRDTPIITFMNKLDRDIRDPMELLDEVENVLKIRCAPITWPIGCGKLFKGVYHLAKDETYLYQSGQGSTIQAVRVVKGLNNPELDVAVGDDLAQQLRDELELVQGASNEFEQDAFIKGELTPVFFGTALGNFGVDHFLDGLTQWAPKPQSRQADTRTVESAEEKFSGFVFKIQANMDPKHRDRVAFMRVVSGKYEKGMKLKHVRIGKDVVISDALTFMAGDRAHAEEAYAGDIIGLHNHGTIQIGDTFTQGETLKFTGIPNFAPELFRRIRLKDPLKQKQLLKGLVQLSEEGAVQVFRPLLNNDLIVGAVGVLQFDVVVSRLKTEYNVEAIYENVNVATARWVECADGKKFEEFKRKNEQNLALDGGDNLTYIAPTMVNLNLAQERYPDVVFYKTREH.

The tr-type G domain occupies 9–278 (NKRRTFAIIS…GLTQWAPKPQ (270 aa)). GTP-binding positions include 18-25 (SHPDAGKT), 86-90 (DTPGH), and 140-143 (NKLD).

This sequence belongs to the TRAFAC class translation factor GTPase superfamily. Classic translation factor GTPase family. PrfC subfamily.

The protein resides in the cytoplasm. In terms of biological role, increases the formation of ribosomal termination complexes and stimulates activities of RF-1 and RF-2. It binds guanine nucleotides and has strong preference for UGA stop codons. It may interact directly with the ribosome. The stimulation of RF-1 and RF-2 is significantly reduced by GTP and GDP, but not by GMP. The protein is Peptide chain release factor 3 of Haemophilus influenzae (strain 86-028NP).